Consider the following 296-residue polypeptide: NAD kinase (296 aa).

The Proton acceptor role is filled by Asp72. NAD(+) is bound by residues Asp72–Gly73, Asn146–Asp147, Arg157, Arg174, Asp176, Thr187–Ser192, and Gln247.

It belongs to the NAD kinase family. The cofactor is a divalent metal cation.

The protein localises to the cytoplasm. The catalysed reaction is NAD(+) + ATP = ADP + NADP(+) + H(+). In terms of biological role, involved in the regulation of the intracellular balance of NAD and NADP, and is a key enzyme in the biosynthesis of NADP. Catalyzes specifically the phosphorylation on 2'-hydroxyl of the adenosine moiety of NAD to yield NADP. This Hahella chejuensis (strain KCTC 2396) protein is NAD kinase.